We begin with the raw amino-acid sequence, 398 residues long: Proteasome-activating nucleotidase (398 aa).

Residues 18 to 59 adopt a coiled-coil conformation; the sequence is IMYLKKRIRQLELQVRTLEADKERLERELSRLRMEMSRLRQP. ATP contacts are provided by residues 183-188 and His322; that span reads GCGKTL. The docks into pockets in the proteasome alpha-ring to cause gate opening stretch occupies residues 396-398; the sequence is MYG.

This sequence belongs to the AAA ATPase family. Homohexamer. The hexameric complex has a two-ring architecture resembling a top hat that caps the 20S proteasome core at one or both ends. Upon ATP-binding, the C-terminus of PAN interacts with the alpha-rings of the proteasome core by binding to the intersubunit pockets.

The protein localises to the cytoplasm. Its function is as follows. ATPase which is responsible for recognizing, binding, unfolding and translocation of substrate proteins into the archaeal 20S proteasome core particle. Is essential for opening the gate of the 20S proteasome via an interaction with its C-terminus, thereby allowing substrate entry and access to the site of proteolysis. Thus, the C-termini of the proteasomal ATPase function like a 'key in a lock' to induce gate opening and therefore regulate proteolysis. Unfolding activity requires energy from ATP hydrolysis, whereas ATP binding alone promotes ATPase-20S proteasome association which triggers gate opening, and supports translocation of unfolded substrates. The sequence is that of Proteasome-activating nucleotidase from Thermococcus onnurineus (strain NA1).